We begin with the raw amino-acid sequence, 444 residues long: Probable glycine dehydrogenase (decarboxylating) subunit 1 (444 aa).

The protein belongs to the GcvP family. N-terminal subunit subfamily. The glycine cleavage system is composed of four proteins: P, T, L and H. In this organism, the P 'protein' is a heterodimer of two subunits.

The enzyme catalyses N(6)-[(R)-lipoyl]-L-lysyl-[glycine-cleavage complex H protein] + glycine + H(+) = N(6)-[(R)-S(8)-aminomethyldihydrolipoyl]-L-lysyl-[glycine-cleavage complex H protein] + CO2. Its function is as follows. The glycine cleavage system catalyzes the degradation of glycine. The P protein binds the alpha-amino group of glycine through its pyridoxal phosphate cofactor; CO(2) is released and the remaining methylamine moiety is then transferred to the lipoamide cofactor of the H protein. The chain is Probable glycine dehydrogenase (decarboxylating) subunit 1 from Chlorobium phaeobacteroides (strain DSM 266 / SMG 266 / 2430).